Here is a 4226-residue protein sequence, read N- to C-terminus: Guanylate cyclase alpha (4226 aa).

The Cytoplasmic segment spans residues Met1 to Gln104. Residues Phe105–Tyr125 traverse the membrane as a helical segment. Residues Gln126–Tyr131 are Extracellular-facing. The N-linked (GlcNAc...) asparagine glycan is linked to Asn127. The chain crosses the membrane as a helical span at residues Met132–Ile152. At Lys153–Ser337 the chain is on the cytoplasmic side. The chain crosses the membrane as a helical span at residues Tyr338–Trp358. Over Thr359–Asn392 the chain is Extracellular. Residue Asn366 is glycosylated (N-linked (GlcNAc...) asparagine). The helical transmembrane segment at Ile393–Ile413 threads the bilayer. Residues Glu414–Thr2083 are Cytoplasmic-facing. 4 disordered regions span residues Glu552 to Cys572, Ser832 to Asp904, Ile968 to Ser989, and Asn1740 to Asn1765. A compositionally biased stretch (low complexity) spans Asp558–Asn570. A compositionally biased stretch (acidic residues) spans Thr838–Ser847. Positions Leu854–Asp873 are enriched in basic and acidic residues. Over residues Gly874–Asp904 the composition is skewed to low complexity. The segment covering Tyr1745 to Asn1754 has biased composition (basic and acidic residues). The span at Asn1755–Asn1765 shows a compositional bias: low complexity. A helical membrane pass occupies residues Ile2084–Phe2104. The Extracellular segment spans residues Tyr2105–Glu2119. Residues Leu2120–Leu2140 form a helical membrane-spanning segment. Over Gln2141–Lys2169 the chain is Cytoplasmic. The chain crosses the membrane as a helical span at residues Phe2170 to Ala2190. Topologically, residues Ala2191–Glu2202 are extracellular. Residues Val2203–Leu2223 traverse the membrane as a helical segment. At Arg2224 to Ser2235 the chain is on the cytoplasmic side. Residues Ile2236 to Cys2256 traverse the membrane as a helical segment. Residues Phe2257–Trp2275 are Extracellular-facing. The helical transmembrane segment at Ala2276 to Ile2296 threads the bilayer. Over Asn2297–Lys2787 the chain is Cytoplasmic. A disordered region spans residues Asn2477–Asn2505. Low complexity predominate over residues Asp2488 to Asn2502. Residues Thr2788–Trp2808 traverse the membrane as a helical segment. The Extracellular portion of the chain corresponds to Lys2809 to Val2828. A helical membrane pass occupies residues Phe2829 to Phe2849. The Cytoplasmic portion of the chain corresponds to Phe2850–Lys2860. A helical membrane pass occupies residues Ile2861–His2881. The Extracellular portion of the chain corresponds to Ile2882–Arg2900. A helical membrane pass occupies residues Leu2901 to Phe2921. At Asn2922 to Lys2930 the chain is on the cytoplasmic side. The helical transmembrane segment at Gly2931–Tyr2951 threads the bilayer. Over Arg2952 to Asp3008 the chain is Extracellular. Residues Ile3009 to Ile3029 traverse the membrane as a helical segment. The 258-residue stretch at Thr3013–Lys3270 folds into the Guanylate cyclase 1 domain. The Cytoplasmic portion of the chain corresponds to Glu3030–Leu3738. Disordered regions lie at residues Glu3077–Asp3150 and Asp3201–Pro3230. Low complexity-rich tracts occupy residues Asn3083–Tyr3098 and Asn3108–Asn3138. The span at Ser3140–Asp3150 shows a compositional bias: acidic residues. Basic and acidic residues predominate over residues Asp3201 to Asn3220. A helical transmembrane segment spans residues Ile3739–Phe3759. Residues Ile3760–Tyr3773 are Extracellular-facing. A helical membrane pass occupies residues Phe3774–Phe3794. At His3795–Met3811 the chain is on the cytoplasmic side. The helical transmembrane segment at Ile3812–Trp3832 threads the bilayer. Topologically, residues Ala3833–Thr3840 are extracellular. Residues Thr3841–Leu3861 traverse the membrane as a helical segment. At His3862 to Thr3871 the chain is on the cytoplasmic side. The chain crosses the membrane as a helical span at residues Cys3872 to Val3892. Position 3893 (Lys3893) is a topological domain, extracellular. A helical membrane pass occupies residues Thr3894 to Ser3914. The Cytoplasmic portion of the chain corresponds to Thr3915–Leu4226. The Guanylate cyclase 2 domain maps to Thr3970 to Glu4104. Mg(2+) contacts are provided by Asp3975, Ile3976, and Asp4019.

It in the N-terminal section; belongs to the cation transport ATPase (P-type) (TC 3.A.3) family. Type IV subfamily. The protein in the C-terminal section; belongs to the adenylyl cyclase class-4/guanylyl cyclase family. Mg(2+) is required as a cofactor. Mn(2+) serves as cofactor.

Its subcellular location is the cell membrane. The protein localises to the cytoplasmic vesicle membrane. It catalyses the reaction GTP = 3',5'-cyclic GMP + diphosphate. Functionally, catalyzes the synthesis of the second messenger cGMP from GTP. In asexual blood stage schizonts, required for cGMP production which is essential for PKG activation, PKG-dependent Ca(2+) release, and ultimately merozoite egress from host erythrocytes. This chain is Guanylate cyclase alpha, found in Plasmodium falciparum (isolate 3D7).